Here is a 500-residue protein sequence, read N- to C-terminus: Protein O-glucosyltransferase 2 (500 aa).

Residues 1 to 22 (MLRKLLLLLMSCIIFLTRRSKA) form the signal peptide. The Filamin repeat unit spans residues 23-128 (AAAASASKTL…LVGKSPYVLR (106 aa)). N60 and N259 each carry an N-linked (GlcNAc...) asparagine glycan. The Prevents secretion from ER signature appears at 497–500 (RDEL).

It belongs to the KDELC family.

It localises to the endoplasmic reticulum lumen. It carries out the reaction L-seryl-[EGF-like domain protein] + UDP-alpha-D-glucose = 3-O-(beta-D-glucosyl)-L-seryl-[EGF-like domain protein] + UDP + H(+). The catalysed reaction is L-seryl-[EGF-like domain protein] + UDP-alpha-D-xylose = 3-O-(beta-D-xylosyl)-L-seryl-[EGF-like domain protein] + UDP + H(+). Its pathway is protein modification; protein glycosylation. In terms of biological role, protein glucosyltransferase that catalyzes the transfer of glucose from UDP-glucose to a serine residue within the consensus sequence peptide C-X-N-T-X-G-S-F-X-C. Can also catalyze the transfer of xylose from UDP-xylose but less efficiently. This chain is Protein O-glucosyltransferase 2 (poglut2), found in Danio rerio (Zebrafish).